A 736-amino-acid polypeptide reads, in one-letter code: Phosphoribosylformylglycinamidine synthase subunit PurL (736 aa).

The active site involves H49. 2 residues coordinate ATP: Y52 and K91. E93 is a Mg(2+) binding site. Residues 94 to 97 and R116 each bind substrate; that span reads SHNH. The Proton acceptor role is filled by H95. Residue D117 participates in Mg(2+) binding. Substrate is bound at residue Q240. D268 provides a ligand contact to Mg(2+). Residue 312–314 coordinates substrate; sequence ESQ. ATP contacts are provided by D493 and G530. Position 531 (N531) interacts with Mg(2+). Position 533 (S533) interacts with substrate.

This sequence belongs to the FGAMS family. Monomer. Part of the FGAM synthase complex composed of 1 PurL, 1 PurQ and 2 PurS subunits.

The protein resides in the cytoplasm. The catalysed reaction is N(2)-formyl-N(1)-(5-phospho-beta-D-ribosyl)glycinamide + L-glutamine + ATP + H2O = 2-formamido-N(1)-(5-O-phospho-beta-D-ribosyl)acetamidine + L-glutamate + ADP + phosphate + H(+). It participates in purine metabolism; IMP biosynthesis via de novo pathway; 5-amino-1-(5-phospho-D-ribosyl)imidazole from N(2)-formyl-N(1)-(5-phospho-D-ribosyl)glycinamide: step 1/2. Part of the phosphoribosylformylglycinamidine synthase complex involved in the purines biosynthetic pathway. Catalyzes the ATP-dependent conversion of formylglycinamide ribonucleotide (FGAR) and glutamine to yield formylglycinamidine ribonucleotide (FGAM) and glutamate. The FGAM synthase complex is composed of three subunits. PurQ produces an ammonia molecule by converting glutamine to glutamate. PurL transfers the ammonia molecule to FGAR to form FGAM in an ATP-dependent manner. PurS interacts with PurQ and PurL and is thought to assist in the transfer of the ammonia molecule from PurQ to PurL. The protein is Phosphoribosylformylglycinamidine synthase subunit PurL of Rhodopseudomonas palustris (strain BisB5).